A 239-amino-acid chain; its full sequence is Ankyrin repeat domain-containing protein 49 (239 aa).

S49 is subject to Phosphoserine. ANK repeat units follow at residues 73 to 103 (DPSR…HVNT), 107 to 136 (DEYT…DVHA), 140 to 169 (DGWT…DINA), and 173 to 206 (GLLT…GLKN).

Widely expressed in fetus, at a high level in fetal liver, brain and lung.

Its subcellular location is the nucleus. Induces HBG1 expression. May have a role in spermatogenesis where it promotes autophagy in response to serum starvation, via the NF-kappaB pathway. The chain is Ankyrin repeat domain-containing protein 49 (ANKRD49) from Homo sapiens (Human).